The sequence spans 264 residues: Somatomedin-B and thrombospondin type-1 domain-containing protein (264 aa).

Residues 1–20 form the signal peptide; sequence MRTLWMALCALSRLWPGAQA. The SMB domain maps to 24 to 75; it reads EAGRCCPGRDPACFARGWRLDRVYGTCFCDQACRFTGDCCFDYDRACPARPC. 7 disulfide bridges follow: cysteine 28/cysteine 36, cysteine 28/cysteine 52, cysteine 36/cysteine 70, cysteine 50/cysteine 52, cysteine 50/cysteine 63, cysteine 56/cysteine 62, and cysteine 63/cysteine 70. The 54-residue stretch at 74–127 folds into the TSP type-1 domain; sequence PCFVGEWSPWSGCADQCKPTTRVRRRSVQQEPQNGGAPCPPLEERAGCLEYSTP. N-linked (GlcNAc...) asparagine glycosylation occurs at asparagine 227.

This sequence belongs to the thrombospondin family. In terms of tissue distribution, detected in aorta extracellular matrix (at protein level).

Its subcellular location is the secreted. It is found in the extracellular space. The protein resides in the extracellular matrix. This chain is Somatomedin-B and thrombospondin type-1 domain-containing protein (SBSPON), found in Homo sapiens (Human).